A 409-amino-acid polypeptide reads, in one-letter code: Outer membrane protein YopM (409 aa).

LRR repeat units follow at residues 72-91 (QAHELELNNLGLSSLPELPP), 92-113 (HLESLVASCNSLTELPELPQSL), 114-131 (KSLLVDNNNLKALSDLPP), 132-153 (LLEYLGVSNNQLEKLPELQNSS), 154-173 (FLKIIDVDNNSLKKLPDLPP), 174-195 (SLEFIAAGNNQLEELPELQNLP), 196-215 (FLTAIYADNNSLKKLPDLPL), 216-237 (SLESIVAGNNILEELPELQNLP), 238-257 (FLTTIYADNNLLKTLPDLPP), 258-279 (SLEALNVRDNYLTDLPELPQSL), 280-297 (TFLDVSENIFSGLSELPP), 298-317 (NLYYLNASSNEIRSLCDLPP), 318-339 (SLEELNVSNNKLIELPALPPRL), 340-357 (ERLIASFNHLAEVPELPQ), and 358-379 (NLKQLHVEYNPLREFPDIPESV). Ca(2+) is bound by residues Asn246 and Asp266. Asn307, Glu308, and Asn326 together coordinate Ca(2+).

This sequence belongs to the LRR-containing bacterial E3 ligase family. In terms of assembly, homotetramer forming a hollow cylinder with an inner diameter of approximately 35 angstroms.

Its subcellular location is the cell outer membrane. The protein localises to the secreted. Its function is as follows. Effector proteins function to alter host cell physiology and promote bacterial survival in host tissues. The protein is Outer membrane protein YopM (yopM) of Yersinia pestis.